Consider the following 398-residue polypeptide: Cyclic GMP-AMP synthase-like receptor (398 aa).

ATP contacts are provided by residues serine 57 and glutamate 69 to aspartate 71. Residues glutamate 69, aspartate 71, and aspartate 192 each coordinate Mg(2+). Residues aspartate 192 and serine 240–glutamate 247 contribute to the GTP site. Residues glutamine 244–glutamate 247, lysine 265, and serine 277–lysine 281 contribute to the ATP site. Residues isoleucine 288, glutamate 289, and aspartate 292 each contribute to the Mn(2+) site.

It belongs to the mab-21 family. Mg(2+) is required as a cofactor. Mn(2+) serves as cofactor.

The enzyme catalyses GTP + ATP = 2',3'-cGAMP + 2 diphosphate. It catalyses the reaction GTP + ATP = pppGp(2'-5')A + diphosphate. The catalysed reaction is pppGp(2'-5')A = 2',3'-cGAMP + diphosphate. With respect to regulation, the enzyme activity is specifically activated by double-stranded RNA (dsRNA). Functionally, nucleotidyltransferase that catalyzes the formation of cyclic GMP-AMP (2',3'-cGAMP) from ATP and GTP and plays a key role in innate immunity. Acts as a key sensor of double-stranded RNA (dsRNA), the presence of dsRNA in the cytoplasm being a danger signal that triggers the immune responses. Directly binds dsRNA, activating the nucleotidyltransferase activity, leading to synthesis of 2',3'-cGAMP, a second messenger that binds to and activates Sting, thereby triggering the antiviral immune response via activation of the NF-kappa-B transcription factor Rel (Relish). This Tribolium castaneum (Red flour beetle) protein is Cyclic GMP-AMP synthase-like receptor.